The sequence spans 315 residues: Probable diguanylate cyclase DgcF (315 aa).

Transmembrane regions (helical) follow at residues 10–30, 41–61, 80–100, and 116–136; these read FSTGVLIVPCMLTLAIPGVLP, IALIVSVIASVVIGGAGSLAF, LLTFVTGAVEIVLVANSVIDI, and LGIATMAICPIMVSFSVAAIN. A GGDEF domain is found at 173 to 310; it reads QHLTVMLLDI…GRNRTSTMRY (138 aa). Mg(2+)-binding residues include aspartate 181 and isoleucine 182. Residues asparagine 189, histidine 194, and aspartate 198 each coordinate substrate. Glutamate 224 is a binding site for Mg(2+).

Homodimer. It depends on Mg(2+) as a cofactor.

It localises to the cell membrane. The catalysed reaction is 2 GTP = 3',3'-c-di-GMP + 2 diphosphate. Its pathway is purine metabolism; 3',5'-cyclic di-GMP biosynthesis. Functionally, catalyzes the synthesis of cyclic-di-GMP (c-di-GMP) via the condensation of 2 GTP molecules. The protein is Probable diguanylate cyclase DgcF of Escherichia coli (strain K12).